A 152-amino-acid chain; its full sequence is Transcriptional regulator MraZ (152 aa).

SpoVT-AbrB domains lie at 5–52 (ASAI…PIHE) and 81–124 (AHEV…DEQA).

The protein belongs to the MraZ family. As to quaternary structure, forms oligomers.

It is found in the cytoplasm. It localises to the nucleoid. This chain is Transcriptional regulator MraZ, found in Shewanella sp. (strain ANA-3).